We begin with the raw amino-acid sequence, 441 residues long: Deoxyguanosinetriphosphate triphosphohydrolase-like protein (441 aa).

In terms of domain architecture, HD spans 62–255; the sequence is RLTHSLEAAQ…MELADDIAYG (194 aa).

The protein belongs to the dGTPase family. Type 2 subfamily.

The sequence is that of Deoxyguanosinetriphosphate triphosphohydrolase-like protein (dgt) from Vibrio cholerae serotype O1 (strain ATCC 39541 / Classical Ogawa 395 / O395).